Reading from the N-terminus, the 192-residue chain is Ribosome maturation factor RimM (192 aa).

A PRC barrel domain is found at 99-186 (ADEYHVSELV…RIEIAPPPGL (88 aa)).

Belongs to the RimM family. In terms of assembly, binds ribosomal protein uS19.

The protein resides in the cytoplasm. An accessory protein needed during the final step in the assembly of 30S ribosomal subunit, possibly for assembly of the head region. Essential for efficient processing of 16S rRNA. May be needed both before and after RbfA during the maturation of 16S rRNA. It has affinity for free ribosomal 30S subunits but not for 70S ribosomes. In Microcystis aeruginosa (strain NIES-843 / IAM M-2473), this protein is Ribosome maturation factor RimM.